The primary structure comprises 269 residues: METFNSLFMVSPLLLGVLFFVAMLAGFIDSIAGGGGLLTIPALMAAGMSPANALATNKLQACGGSISATIYFIRRKVVSLSDQKLNIAMTFVGSMSGALLVQYVQADVLRQILPILVICIGLYFLLMPKLGEEDRQRRMYGLPFALIAGGCVGFYDGFFGPAAGSFYALAFVTLCGFNLAKATAHAKLLNATSNIGGLLLFILGGKVIWATGFVMLVGQFLGARMGSRLVLSKGQKLIRPMIVIVSAVMSAKLLYDSHGQEILHWLGMN.

The Periplasmic portion of the chain corresponds to 1-7 (METFNSL). The chain crosses the membrane as a helical span at residues 8–28 (FMVSPLLLGVLFFVAMLAGFI). Residues 29-30 (DS) are Cytoplasmic-facing. A helical transmembrane segment spans residues 31-51 (IAGGGGLLTIPALMAAGMSPA). Over 52–84 (NALATNKLQACGGSISATIYFIRRKVVSLSDQK) the chain is Periplasmic. Residues 85–105 (LNIAMTFVGSMSGALLVQYVQ) form a helical membrane-spanning segment. The Cytoplasmic segment spans residues 106–111 (ADVLRQ). The chain crosses the membrane as a helical span at residues 112 to 132 (ILPILVICIGLYFLLMPKLGE). Over 133 to 156 (EDRQRRMYGLPFALIAGGCVGFYD) the chain is Periplasmic. A helical transmembrane segment spans residues 157–177 (GFFGPAAGSFYALAFVTLCGF). Topologically, residues 178 to 197 (NLAKATAHAKLLNATSNIGG) are cytoplasmic. Residues 198-218 (LLLFILGGKVIWATGFVMLVG) form a helical membrane-spanning segment. Residues 219–269 (QFLGARMGSRLVLSKGQKLIRPMIVIVSAVMSAKLLYDSHGQEILHWLGMN) lie on the Periplasmic side of the membrane.

It belongs to the 4-toluene sulfonate uptake permease (TSUP) (TC 2.A.102) family.

Its subcellular location is the cell inner membrane. This Escherichia coli O157:H7 protein is Probable membrane transporter protein YfcA (yfcA).